A 355-amino-acid polypeptide reads, in one-letter code: Probable aldo-keto reductase 3 (355 aa).

Catalysis depends on Tyr70, which acts as the Proton donor. Residue His138 coordinates substrate. An NADP(+)-binding site is contributed by 217–227 (SPLGRGFFSSG).

This sequence belongs to the aldo/keto reductase family.

In Oryza sativa subsp. indica (Rice), this protein is Probable aldo-keto reductase 3.